The chain runs to 913 residues: Calcium-activated chloride channel regulator 1 (913 aa).

The first 21 residues, 1–21 (MGSFKSSVFILVLHLLEGALS), serve as a signal peptide directing secretion. The interval 46–199 (DETLIQQIKD…DIAGKNVVNH (154 aa)) is metalloprotease domain. Residue histidine 156 coordinates Zn(2+). Residue glutamate 157 is part of the active site. Positions 160 and 167 each coordinate Zn(2+). Positions 306-475 (IVCLVLDKSG…NGLIDAFGAL (170 aa)) constitute a VWFA domain. N-linked (GlcNAc...) asparagine glycosylation is found at asparagine 503, asparagine 514, asparagine 770, asparagine 804, asparagine 810, asparagine 836, and asparagine 885.

The protein belongs to the CLCR family. Glycosylated. Post-translationally, the translation product is autoproteolytically cleaved by the metalloprotease domain in the endoplasmic reticulum into a N-terminal and a C-terminal products that remain physically associated with each other. The cleavage is necessary for calcium-activated chloride channel (CaCC) activation activity. Expressed in mucin-producing cells in the respiratory and intestinal tracts, cutaneous sweat glands, and renal mucous glands (at protein level). Strong overexpression in the airways of horses with recurrent airway obstruction (at protein level).

Its subcellular location is the secreted. It localises to the extracellular space. In terms of biological role, may be involved in mediating calcium-activated chloride conductance. May play critical roles in goblet cell metaplasia, mucus hypersecretion, cystic fibrosis and AHR. May be involved in the regulation of mucus production and/or secretion by goblet cells. Involved in the regulation of tissue inflammation in the innate immune response. May play a role as a tumor suppressor. Induces MUC5AC. This chain is Calcium-activated chloride channel regulator 1 (CLCA1), found in Equus caballus (Horse).